A 491-amino-acid polypeptide reads, in one-letter code: Glutamyl-tRNA(Gln) amidotransferase subunit A (491 aa).

Catalysis depends on charge relay system residues lysine 79 and serine 154. The active-site Acyl-ester intermediate is the serine 178.

Belongs to the amidase family. GatA subfamily. Heterotrimer of A, B and C subunits.

The catalysed reaction is L-glutamyl-tRNA(Gln) + L-glutamine + ATP + H2O = L-glutaminyl-tRNA(Gln) + L-glutamate + ADP + phosphate + H(+). In terms of biological role, allows the formation of correctly charged Gln-tRNA(Gln) through the transamidation of misacylated Glu-tRNA(Gln) in organisms which lack glutaminyl-tRNA synthetase. The reaction takes place in the presence of glutamine and ATP through an activated gamma-phospho-Glu-tRNA(Gln). This is Glutamyl-tRNA(Gln) amidotransferase subunit A from Synechococcus sp. (strain CC9902).